The chain runs to 232 residues: Large ribosomal subunit protein uL1 (232 aa).

The protein belongs to the universal ribosomal protein uL1 family. Part of the 50S ribosomal subunit.

In terms of biological role, binds directly to 23S rRNA. The L1 stalk is quite mobile in the ribosome, and is involved in E site tRNA release. Its function is as follows. Protein L1 is also a translational repressor protein, it controls the translation of the L11 operon by binding to its mRNA. The chain is Large ribosomal subunit protein uL1 from Bacillus cereus (strain ATCC 14579 / DSM 31 / CCUG 7414 / JCM 2152 / NBRC 15305 / NCIMB 9373 / NCTC 2599 / NRRL B-3711).